Consider the following 268-residue polypeptide: Chymotrypsin-C (268 aa).

The first 16 residues, 1-16, serve as a signal peptide directing secretion; it reads MLGITVLAAILACASS. Residues 17 to 29 constitute a propeptide, activation peptide; it reads CGDPTFPPNLSAR. Disulfide bonds link cysteine 17/cysteine 141, cysteine 59/cysteine 75, cysteine 155/cysteine 222, cysteine 186/cysteine 202, and cysteine 212/cysteine 243. N-linked (GlcNAc...) asparagine glycosylation occurs at asparagine 25. The region spanning 30–267 is the Peptidase S1 domain; sequence VVGGEDAVPN…YIDWIKEKIQ (238 aa). The Charge relay system role is filled by histidine 74. Asparagine 79 and asparagine 90 each carry an N-linked (GlcNAc...) asparagine glycan. Aspartate 121 serves as the catalytic Charge relay system. A glycan (N-linked (GlcNAc...) asparagine) is linked at asparagine 182. Serine 216 (charge relay system) is an active-site residue.

The protein belongs to the peptidase S1 family. Elastase subfamily.

The enzyme catalyses Preferential cleavage: Leu-|-Xaa, Tyr-|-Xaa, Phe-|-Xaa, Met-|-Xaa, Trp-|-Xaa, Gln-|-Xaa, Asn-|-Xaa.. In terms of biological role, regulates activation and degradation of trypsinogens and procarboxypeptidases by targeting specific cleavage sites within their zymogen precursors. Has chymotrypsin-type protease activity and hypocalcemic activity. Cleaves TRY4 and TRY5 and thereby inhibits their autoactivation. The protein is Chymotrypsin-C (Ctrc) of Mus musculus (Mouse).